Here is a 416-residue protein sequence, read N- to C-terminus: Notoamide biosynthesis cluster protein N' (416 aa).

The N-terminal stretch at 1–16 (MRAALLTLAFTALAAA) is a signal peptide. N-linked (GlcNAc...) asparagine glycosylation is found at Asn-119 and Asn-262.

Functionally, part of the gene cluster that mediates the biosynthesis of notoamide, a fungal indole alkaloid that belongs to a family of natural products containing a characteristic bicyclo[2.2.2]diazaoctane core. The first step of notoamide biosynthesis involves coupling of L-proline and L-tryptophan by the bimodular NRPS notE', to produce cyclo-L-tryptophan-L-proline called brevianamide F. The reverse prenyltransferase notF' then acts as a deoxybrevianamide E synthase and converts brevianamide F to deoxybrevianamide E via reverse prenylation at C-2 of the indole ring leading to the bicyclo[2.2.2]diazaoctane core. Deoxybrevianamide E is further hydroxylated at C-6 of the indole ring, likely catalyzed by the cytochrome P450 monooxygenase notG', to yield 6-hydroxy-deoxybrevianamide E. 6-hydroxy-deoxybrevianamide E is a specific substrate of the prenyltransferase notC' for normal prenylation at C-7 to produce 6-hydroxy-7-prenyl-deoxybrevianamide, also called notoamide S. As the proposed pivotal branching point in notoamide biosynthesis, notoamide S can be diverted to notoamide E through an oxidative pyran ring closure putatively catalyzed by either notH' cytochrome P450 monooxygenase or the notD' FAD-linked oxidoreductase. This step would be followed by an indole 2,3-epoxidation-initiated pinacol-like rearrangement catalyzed by the notB' FAD-dependent monooxygenase leading to the formation of notoamide C and notoamide D. On the other hand notoamide S is converted to notoamide T by notH' (or notD'), a bifunctional oxidase that also functions as the intramolecular Diels-Alderase responsible for generation of (-)-notoamide T. To generate antipodal (+)-notoaminide T, notH (or notD) in Aspergillus strain MF297-2 is expected to catalyze a Diels-Alder reaction leading to the opposite stereochemistry. The remaining oxidoreductase notD' (or notH') likely catalyzes the oxidative pyran ring formation to yield (-)-stephacidin A. The FAD-dependent monooxygenase notI' is highly similar to notB' and is predicted to catalyze a similar conversion from (-)-stephacidin A to (+)-notoamide B via the 2,3-epoxidation of (-)-stephacidin A followed by a pinacol-type rearrangement. Finally, it remains unclear which enzyme could be responsible for the final hydroxylation steps leading to notoamide A and sclerotiamide. The function of notN' in the notoamide biosynthesis has not been determined yet. In Aspergillus versicolor, this protein is Notoamide biosynthesis cluster protein N'.